The primary structure comprises 177 residues: Large ribosomal subunit protein uL6 (177 aa).

The protein belongs to the universal ribosomal protein uL6 family. In terms of assembly, part of the 50S ribosomal subunit.

In terms of biological role, this protein binds to the 23S rRNA, and is important in its secondary structure. It is located near the subunit interface in the base of the L7/L12 stalk, and near the tRNA binding site of the peptidyltransferase center. The chain is Large ribosomal subunit protein uL6 from Hydrogenovibrio crunogenus (strain DSM 25203 / XCL-2) (Thiomicrospira crunogena).